A 751-amino-acid polypeptide reads, in one-letter code: MVAERTRKAAASGSRGPGELGAPGPGTVALAEQCARLPSPGCCGLLALALCSLALSLLAHFRTAELQARVLRLEAERGEQQMEKAILGRVNQLLDEKWKFYSRRRREAPKMSPGCNCPPGPPGPTGRPGLPGDKGAIGMPGRVGIKGQPGEKGAPGDAGMSIVGPRGPPGQPGTRGFPGFPGPIGLDGRPGHPGPKGEMGLVGPRGQPGPQGQKGEKGQCGEYPHREYPGGMLAALRSNPIMSLKLLPLLNSVRLAPPPVIKRRTFQGEQSQTGIQGPPGPPGPPGPSGPLGHPGLPGPIGPPGLPGPPGPKGDPGIQGYHGRKGERGMPGMPGKHGAKGVPGIAVAGMKGEPGTPGTKGEKGAAGSPGLLGQKGEKGDAGNAIGGGRGEPGPPGLPGPPGPKGEAGVDGQAGPPGQQGDKGQPGAAGEQGPSGPKGAKGEPGKGEMVDYNGSINEALQEIRTLALMGPPGLPGQTGPPGPPGTPGQRGEIGLPGPPGHDGDKGPRGKPGDMGPAGPQGPPGKDGPPGMKGEVGPPGSPGEKGETGQAGPQGLDGPTGEKGEPGDEGRPGATGLPGPIGLPGFTGEKGEAGEKGDPGAEVPGPPGPEGPPGPPGLQGFPGPKGEAGLEGSKGEKGSQGEKGDRGPLGLPGASGLDGRPGPPGTPGPIGVPGPAGPKGERGSKGDPGMTGPTGAAGLPGLHGPPGDKGNRGERGKKGSRGPKGDKGDQGAPGLDAPCPLGEDGLPVQGCWNK.

The tract at residues 1–24 (MVAERTRKAAASGSRGPGELGAPG) is disordered. Residues 1–40 (MVAERTRKAAASGSRGPGELGAPGPGTVALAEQCARLPSP) lie on the Cytoplasmic side of the membrane. Residues 1–119 (MVAERTRKAA…KMSPGCNCPP (119 aa)) form a nonhelical region 1 (NC1) region. Over residues 15–24 (RGPGELGAPG) the composition is skewed to gly residues. The helical; Signal-anchor for type II membrane protein transmembrane segment at 41-59 (GCCGLLALALCSLALSLLA) threads the bilayer. Residues 60–751 (HFRTAELQAR…GLPVQGCWNK (692 aa)) are Extracellular-facing. Disordered stretches follow at residues 108–127 (APKM…PTGR), 190–225 (PGHP…EYPH), and 265–449 (TFQG…EMVD). Pro residues predominate over residues 116–125 (NCPPGPPGPT). The triple-helical region 1 (COL1) stretch occupies residues 120-223 (GPPGPTGRPG…KGEKGQCGEY (104 aa)). A compositionally biased stretch (low complexity) spans 204–213 (PRGQPGPQGQ). Residues 214 to 225 (KGEKGQCGEYPH) are compositionally biased toward basic and acidic residues. The nonhelical region 2 (NC2) stretch occupies residues 224-273 (PHREYPGGMLAALRSNPIMSLKLLPLLNSVRLAPPPVIKRRTFQGEQSQT). The segment at 274 to 445 (GIQGPPGPPG…KGAKGEPGKG (172 aa)) is triple-helical region 2 (COL2). Pro residues-rich tracts occupy residues 278-288 (PPGPPGPPGPS), 296-312 (LPGP…PGPK), and 391-402 (PGPPGLPGPPGP). Residues 403–436 (KGEAGVDGQAGPPGQQGDKGQPGAAGEQGPSGPK) are compositionally biased toward low complexity. Residues 438 to 447 (AKGEPGKGEM) show a composition bias toward basic and acidic residues. Positions 446–467 (EMVDYNGSINEALQEIRTLALM) are nonhelical region 3 (NC3). Asparagine 451 carries an N-linked (GlcNAc...) asparagine glycan. Positions 466 to 751 (LMGPPGLPGQ…GLPVQGCWNK (286 aa)) are disordered. The triple-helical region 3 (COL3) stretch occupies residues 468–733 (GPPGLPGQTG…KGDQGAPGLD (266 aa)). Residues 470–484 (PGLPGQTGPPGPPGT) show a composition bias toward pro residues. 3 stretches are compositionally biased toward basic and acidic residues: residues 499–509 (HDGDKGPRGKP), 557–568 (TGEKGEPGDEGR), and 586–596 (EKGEAGEKGDP). A compositionally biased stretch (pro residues) spans 601–613 (PGPPGPEGPPGPP). Low complexity predominate over residues 615–628 (LQGFPGPKGEAGLE). Residues 630 to 643 (SKGEKGSQGEKGDR) show a composition bias toward basic and acidic residues. Pro residues predominate over residues 658 to 673 (PGPPGTPGPIGVPGPA). Residues 684–699 (DPGMTGPTGAAGLPGL) are compositionally biased toward low complexity. Residues 706 to 726 (KGNRGERGKKGSRGPKGDKGD) are compositionally biased toward basic and acidic residues. The nonhelical region 4 (NC4) stretch occupies residues 734-751 (APCPLGEDGLPVQGCWNK).

Homotrimer; disulfide-linked. Nucleation of the type XIII collagen triple helix is likely to occur at the N-terminal region with triple helix formation proceeding from the N- to the C-terminus. Interacts with FN1, perlecan/HSPG2 and NID2.

Its subcellular location is the cell membrane. The protein localises to the postsynaptic cell membrane. Its function is as follows. Involved in cell-matrix and cell-cell adhesion interactions that are required for normal development. May participate in the linkage between muscle fiber and basement membrane. May play a role in endochondral ossification of bone and branching morphogenesis of lung. Binds heparin. At neuromuscular junctions, may play a role in acetylcholine receptor clustering. The polypeptide is Collagen alpha-1(XIII) chain (Mus musculus (Mouse)).